A 775-amino-acid chain; its full sequence is Aconitate hydratase, mitochondrial (775 aa).

The transit peptide at 1-25 directs the protein to the mitochondrion; that stretch reads MLTTLARASAMLLGARGFASAADLD. Residues Gln95 and 188–190 contribute to the substrate site; that span reads DSH. N-linked (GlcNAc...) asparagine glycosylation is present at Asn337. Cys381 is a [4Fe-4S] cluster binding site. N-linked (GlcNAc...) asparagine glycosylation occurs at Asn383. [4Fe-4S] cluster-binding residues include Cys444 and Cys447. Residue Arg470 coordinates substrate. The N-linked (GlcNAc...) asparagine glycan is linked to Asn471. Positions 475 and 603 each coordinate substrate. Asn608 is a glycosylation site (N-linked (GlcNAc...) asparagine). Position 666-667 (666-667) interacts with substrate; it reads SR. N-linked (GlcNAc...) asparagine glycosylation is found at Asn754 and Asn763.

It belongs to the aconitase/IPM isomerase family. In terms of assembly, monomer. It depends on [4Fe-4S] cluster as a cofactor.

The protein resides in the mitochondrion. The catalysed reaction is citrate = D-threo-isocitrate. The protein operates within carbohydrate metabolism; tricarboxylic acid cycle; isocitrate from oxaloacetate: step 2/2. Catalyzes the isomerization of citrate to isocitrate via cis-aconitate. The polypeptide is Aconitate hydratase, mitochondrial (Arthroderma benhamiae (strain ATCC MYA-4681 / CBS 112371) (Trichophyton mentagrophytes)).